The primary structure comprises 255 residues: MSKALPLRLGVNVDHVATLRNARGGKHPDPVRAALAAIEAGADGITAHLREDRRHIRDADMARLKAEISKPLNFEMAATPDMVQIALATKPHAVCLVPERREEVTTEGGLDVIGHHNTLAPFIARFNDAGIRTSLFIAADPAQIEMAAELHAPVIEIHTGAWCDAVEAGNAVKAEAEWQRIVAGAKLAQSVGLEVHGGHGLDYATAQTISALPQIAELNIGFHLMGEALFVGLTESIRRMRAAMARGRQALEATA.

Position 12 (Asn12) interacts with 3-amino-2-oxopropyl phosphate. Residue 14-15 (DH) coordinates 1-deoxy-D-xylulose 5-phosphate. 3-amino-2-oxopropyl phosphate is bound at residue Arg23. Residue His48 is the Proton acceptor of the active site. 1-deoxy-D-xylulose 5-phosphate is bound by residues Arg50 and His55. Glu75 acts as the Proton acceptor in catalysis. 1-deoxy-D-xylulose 5-phosphate is bound at residue Thr105. The Proton donor role is filled by His199. 3-amino-2-oxopropyl phosphate contacts are provided by residues Gly200 and 221–222 (GF).

This sequence belongs to the PNP synthase family. As to quaternary structure, homooctamer; tetramer of dimers.

It is found in the cytoplasm. The catalysed reaction is 3-amino-2-oxopropyl phosphate + 1-deoxy-D-xylulose 5-phosphate = pyridoxine 5'-phosphate + phosphate + 2 H2O + H(+). It functions in the pathway cofactor biosynthesis; pyridoxine 5'-phosphate biosynthesis; pyridoxine 5'-phosphate from D-erythrose 4-phosphate: step 5/5. Its function is as follows. Catalyzes the complicated ring closure reaction between the two acyclic compounds 1-deoxy-D-xylulose-5-phosphate (DXP) and 3-amino-2-oxopropyl phosphate (1-amino-acetone-3-phosphate or AAP) to form pyridoxine 5'-phosphate (PNP) and inorganic phosphate. This is Pyridoxine 5'-phosphate synthase from Rhodopseudomonas palustris (strain BisB18).